The primary structure comprises 1362 residues: DNA-directed RNA polymerase subunit beta' (1362 aa).

Basic residues predominate over residues 1–14 (MTSSSKSRKSKSSK). Residues 1–39 (MTSSSKSRKSKSSKASKAAKEAPVSASRPLSKTPPPFRN) are disordered. Positions 15–27 (ASKAAKEAPVSAS) are enriched in low complexity. Residues Cys248, Cys315, Cys322, and Cys325 each coordinate Zn(2+). The tract at residues 1316-1336 (TRHNIDPSASNFAAFTRPDAD) is disordered.

This sequence belongs to the RNA polymerase beta' chain family. RpoC2 subfamily. In cyanobacteria the RNAP catalytic core is composed of 2 alpha, 1 beta, 1 beta', 1 gamma and 1 omega subunit. When a sigma factor is associated with the core the holoenzyme is formed, which can initiate transcription. Requires Zn(2+) as cofactor.

The catalysed reaction is RNA(n) + a ribonucleoside 5'-triphosphate = RNA(n+1) + diphosphate. Its function is as follows. DNA-dependent RNA polymerase catalyzes the transcription of DNA into RNA using the four ribonucleoside triphosphates as substrates. The polypeptide is DNA-directed RNA polymerase subunit beta' (Synechococcus sp. (strain CC9605)).